The chain runs to 246 residues: Small ribosomal subunit protein uS2 (246 aa).

This sequence belongs to the universal ribosomal protein uS2 family.

In Burkholderia pseudomallei (strain 668), this protein is Small ribosomal subunit protein uS2.